The following is a 347-amino-acid chain: MDRSFASEIQARIDNKTKPLGALGLLEKVALELALIQSQDKLQSVETIEIRKPTMLVFAGDHGIAKEGVSIAPSAVTQQMVANFLAGGAAINCFCDLNQIDFKVVDCGMLSPIDTLVPDFKHHPNLIERRLGNGTANFAKQTAMSLEQVALGLEYGAKVAQQAILNGSNLLMFGEMGIGNTSSASALLTALSLLEVDHCVGYGTGITQEQLNRKIKLVAQGVNRCHDLDTKGALAQVGGFEIVQMVGAFLEAKRHKTPVLVDGFIVSVAAYVATLLDEETRDYMLFAHNSEENGHKFVLECLQAEPLLDLGLRLGEGTGAALALPLVKAAAQFYNNMASFESAGVTV.

The active-site Proton acceptor is the Glu-316.

This sequence belongs to the CobT family.

The catalysed reaction is 5,6-dimethylbenzimidazole + nicotinate beta-D-ribonucleotide = alpha-ribazole 5'-phosphate + nicotinate + H(+). The protein operates within nucleoside biosynthesis; alpha-ribazole biosynthesis; alpha-ribazole from 5,6-dimethylbenzimidazole: step 1/2. Its function is as follows. Catalyzes the synthesis of alpha-ribazole-5'-phosphate from nicotinate mononucleotide (NAMN) and 5,6-dimethylbenzimidazole (DMB). The sequence is that of Nicotinate-nucleotide--dimethylbenzimidazole phosphoribosyltransferase from Vibrio campbellii (strain ATCC BAA-1116).